The following is a 292-amino-acid chain: Ribonuclease Z (292 aa).

7 residues coordinate Zn(2+): H60, H62, D64, H65, H132, D200, and H256. The active-site Proton acceptor is the D64.

It belongs to the RNase Z family. Homodimer. It depends on Zn(2+) as a cofactor.

The enzyme catalyses Endonucleolytic cleavage of RNA, removing extra 3' nucleotides from tRNA precursor, generating 3' termini of tRNAs. A 3'-hydroxy group is left at the tRNA terminus and a 5'-phosphoryl group is left at the trailer molecule.. Zinc phosphodiesterase, which displays some tRNA 3'-processing endonuclease activity. Probably involved in tRNA maturation, by removing a 3'-trailer from precursor tRNA. The protein is Ribonuclease Z of Sulfolobus acidocaldarius (strain ATCC 33909 / DSM 639 / JCM 8929 / NBRC 15157 / NCIMB 11770).